A 318-amino-acid polypeptide reads, in one-letter code: Pyrimidine-specific ribonucleoside hydrolase RihA (318 aa).

The active site involves His-240.

The protein belongs to the IUNH family. RihA subfamily.

Functionally, hydrolyzes cytidine or uridine to ribose and cytosine or uracil, respectively. This Shewanella baltica (strain OS185) protein is Pyrimidine-specific ribonucleoside hydrolase RihA.